Here is a 185-residue protein sequence, read N- to C-terminus: Ribosome-recycling factor (185 aa).

The segment at 135-159 is disordered; that stretch reads ANDEVKKLEKDKAITEDESKKGQDE.

It belongs to the RRF family.

It localises to the cytoplasm. Its function is as follows. Responsible for the release of ribosomes from messenger RNA at the termination of protein biosynthesis. May increase the efficiency of translation by recycling ribosomes from one round of translation to another. In Campylobacter curvus (strain 525.92), this protein is Ribosome-recycling factor.